Reading from the N-terminus, the 230-residue chain is Heptaprenylglyceryl phosphate synthase (230 aa).

A sn-glycerol 1-phosphate-binding site is contributed by K12. Positions 14 and 40 each coordinate Mg(2+). Sn-glycerol 1-phosphate-binding positions include 159-164, G189, and 209-210; these read YIEYSG and GD.

The protein belongs to the GGGP/HepGP synthase family. Group I subfamily. As to quaternary structure, homodimer. It depends on Mg(2+) as a cofactor.

It carries out the reaction sn-glycerol 1-phosphate + all-trans-heptaprenyl diphosphate = 3-heptaprenyl-sn-glycero-1-phosphate + diphosphate. It participates in membrane lipid metabolism; glycerophospholipid metabolism. In terms of biological role, prenyltransferase that catalyzes in vivo the transfer of the heptaprenyl moiety of heptaprenyl pyrophosphate (HepPP; 35 carbon atoms) to the C3 hydroxyl of sn-glycerol-1-phosphate (G1P), producing heptaprenylglyceryl phosphate (HepGP). This reaction is an ether-bond-formation step in the biosynthesis of archaea-type G1P-based membrane lipids found in Bacillales. To a much lesser extent, is also able to use geranylgeranyl diphosphate (GGPP; C20) as the prenyl donor. The protein is Heptaprenylglyceryl phosphate synthase of Staphylococcus aureus (strain NCTC 8325 / PS 47).